Here is a 273-residue protein sequence, read N- to C-terminus: Putative phosphoenolpyruvate synthase regulatory protein (273 aa).

154–161 (GVSRSGKT) contributes to the ADP binding site.

The protein belongs to the pyruvate, phosphate/water dikinase regulatory protein family. PSRP subfamily.

It catalyses the reaction [pyruvate, water dikinase] + ADP = [pyruvate, water dikinase]-phosphate + AMP + H(+). The catalysed reaction is [pyruvate, water dikinase]-phosphate + phosphate + H(+) = [pyruvate, water dikinase] + diphosphate. In terms of biological role, bifunctional serine/threonine kinase and phosphorylase involved in the regulation of the phosphoenolpyruvate synthase (PEPS) by catalyzing its phosphorylation/dephosphorylation. The protein is Putative phosphoenolpyruvate synthase regulatory protein of Neisseria meningitidis serogroup C (strain 053442).